We begin with the raw amino-acid sequence, 73 residues long: Putative membrane protein insertion efficiency factor (73 aa).

This sequence belongs to the UPF0161 family.

The protein resides in the cell inner membrane. Its function is as follows. Could be involved in insertion of integral membrane proteins into the membrane. The protein is Putative membrane protein insertion efficiency factor of Neisseria meningitidis serogroup C / serotype 2a (strain ATCC 700532 / DSM 15464 / FAM18).